Reading from the N-terminus, the 466-residue chain is ATP synthase subunit beta (466 aa).

156–163 (GGAGVGKT) contacts ATP.

It belongs to the ATPase alpha/beta chains family. F-type ATPases have 2 components, CF(1) - the catalytic core - and CF(0) - the membrane proton channel. CF(1) has five subunits: alpha(3), beta(3), gamma(1), delta(1), epsilon(1). CF(0) has three main subunits: a(1), b(2) and c(9-12). The alpha and beta chains form an alternating ring which encloses part of the gamma chain. CF(1) is attached to CF(0) by a central stalk formed by the gamma and epsilon chains, while a peripheral stalk is formed by the delta and b chains.

Its subcellular location is the cell membrane. The catalysed reaction is ATP + H2O + 4 H(+)(in) = ADP + phosphate + 5 H(+)(out). Its function is as follows. Produces ATP from ADP in the presence of a proton gradient across the membrane. The catalytic sites are hosted primarily by the beta subunits. The chain is ATP synthase subunit beta from Buchnera aphidicola subsp. Schizaphis graminum (strain Sg).